The primary structure comprises 1105 residues: Lysylphosphatidylglycerol biosynthesis bifunctional protein LysX (1105 aa).

Residues 1-603 (MTVTKPRSVQ…LLHHDGSAPD (603 aa)) form a phosphatidylglycerol lysyltransferase region. Transmembrane regions (helical) follow at residues 20-40 (VPAA…LASI), 62-82 (FPDT…ALAA), 86-106 (IAWL…AADI), 117-137 (FGEN…VLGY), 154-174 (AVLV…VELF), 186-203 (YVAN…DLFT), and 208-228 (VFLN…ATIV). Residues 604–1105 (VSGLRQSAIA…TLPFPLAKPH (502 aa)) are lysine--tRNA ligase. Positions 1017 and 1024 each coordinate Mg(2+).

This sequence in the N-terminal section; belongs to the LPG synthetase family. It in the C-terminal section; belongs to the class-II aminoacyl-tRNA synthetase family. The cofactor is Mg(2+).

It is found in the cell membrane. It carries out the reaction tRNA(Lys) + L-lysine + ATP = L-lysyl-tRNA(Lys) + AMP + diphosphate. The catalysed reaction is L-lysyl-tRNA(Lys) + a 1,2-diacyl-sn-glycero-3-phospho-(1'-sn-glycerol) = a 1,2-diacyl-sn-glycero-3-phospho-1'-(3'-O-L-lysyl)-sn-glycerol + tRNA(Lys). In terms of biological role, catalyzes the production of L-lysyl-tRNA(Lys)transfer and the transfer of a lysyl group from L-lysyl-tRNA(Lys) to membrane-bound phosphatidylglycerol (PG), which produces lysylphosphatidylglycerol (LPG), one of the components of the bacterial membrane with a positive net charge. LPG synthesis contributes to the resistance to cationic antimicrobial peptides (CAMPs) and likely protects M.tuberculosis against the CAMPs produced by competiting microorganisms (bacteriocins). In fact, the modification of anionic phosphatidylglycerol with positively charged L-lysine results in repulsion of the peptides. The sequence is that of Lysylphosphatidylglycerol biosynthesis bifunctional protein LysX (lysX) from Mycobacterium marinum (strain ATCC BAA-535 / M).